Consider the following 330-residue polypeptide: MLLLALAFFFPAGDTQNVLPGKISFYGIQISTFFNHTVVENRGSGWLGDMEISSWDSEKETIIFRKPWSKGNFSNDEILEVEEIFQVYFFGFVREAQKHMSDFQVEYPFEIQVISGCEVNSHRSFDYFMRVAVKGLDLLSIKNHSCWPAPEGVSRAQEIWTLILQYKRICDTVEILLTKTCPRYLMSVIEAGKSDLQKQVKPDAWLSQGPSPGPGLLQLVCHVSGFYPKPVWVMWMRGDKELPETQKRDVLPNADETWYLRVTLDVAAEEAAGLSCRVKHSSLEGQDIILYWGHSISIGWIILAVLVPCLIVLVLFILWFYRRWSYEDIF.

A signal peptide spans 1-15 (MLLLALAFFFPAGDT). Topologically, residues 16–299 (QNVLPGKISF…LYWGHSISIG (284 aa)) are extracellular. N-linked (GlcNAc...) asparagine glycosylation is found at N35, N72, and N143. 2 cysteine pairs are disulfide-bonded: C117-C181 and C221-C276. The 111-residue stretch at 182-292 (PRYLMSVIEA…LEGQDIILYW (111 aa)) folds into the Ig-like domain. A helical membrane pass occupies residues 300 to 320 (WIILAVLVPCLIVLVLFILWF). Residues 321-330 (YRRWSYEDIF) lie on the Cytoplasmic side of the membrane. An Internalization signal motif is present at residues 326–329 (YEDI).

In terms of assembly, heterodimer with B2M (beta-2-microglobulin). Interacts with saposin C.

It localises to the cell membrane. Its subcellular location is the endosome membrane. It is found in the lysosome membrane. Its function is as follows. Antigen-presenting protein that binds self and non-self lipid and glycolipid antigens and presents them to T-cell receptors on natural killer T-cells. The protein is T-cell surface glycoprotein CD1b4 (CD1B4) of Cavia porcellus (Guinea pig).